Reading from the N-terminus, the 920-residue chain is Isoleucine--tRNA ligase (920 aa).

A 'HIGH' region motif is present at residues 58–68; sequence PYANGHLHLGH. Glu-569 provides a ligand contact to L-isoleucyl-5'-AMP. Residues 610-614 carry the 'KMSKS' region motif; sequence KMSKS. Residue Lys-613 coordinates ATP. Cys-895, Cys-898, Cys-910, and Cys-913 together coordinate Zn(2+).

This sequence belongs to the class-I aminoacyl-tRNA synthetase family. IleS type 1 subfamily. In terms of assembly, monomer. Zn(2+) is required as a cofactor.

Its subcellular location is the cytoplasm. The catalysed reaction is tRNA(Ile) + L-isoleucine + ATP = L-isoleucyl-tRNA(Ile) + AMP + diphosphate. Functionally, catalyzes the attachment of isoleucine to tRNA(Ile). As IleRS can inadvertently accommodate and process structurally similar amino acids such as valine, to avoid such errors it has two additional distinct tRNA(Ile)-dependent editing activities. One activity is designated as 'pretransfer' editing and involves the hydrolysis of activated Val-AMP. The other activity is designated 'posttransfer' editing and involves deacylation of mischarged Val-tRNA(Ile). This Helicobacter pylori (strain Shi470) protein is Isoleucine--tRNA ligase.